We begin with the raw amino-acid sequence, 211 residues long: UPF0056 membrane protein BUsg_257 (211 aa).

6 consecutive transmembrane segments (helical) span residues 14–34, 54–74, 76–96, 116–136, 144–164, and 185–205; these read FFVSLCALVNPIGMIPIFTTM, AFIILLISLFAGNSILNAFGI, INSFRIAGGILIISIAFSMIS, VVPLAMPLIAGPGAISSTIVW, SDFLGCSIAIFLFAFVCWLCF, and IMGLLLMSLGIEFLSIGIKSI.

The protein belongs to the UPF0056 (MarC) family.

It localises to the cell membrane. This chain is UPF0056 membrane protein BUsg_257, found in Buchnera aphidicola subsp. Schizaphis graminum (strain Sg).